Here is a 477-residue protein sequence, read N- to C-terminus: Adenylyl cyclase-associated protein 2 (477 aa).

Alanine 2 is modified (N-acetylalanine). Disordered regions lie at residues 224–262 (SILS…PSRS) and 274–324 (ITKG…HAPV). Pro residues predominate over residues 231 to 248 (GLPPPPPPPPPPGPPPPF). Low complexity predominate over residues 300-318 (RSPTKTRTPSPTSSKSNSP). 2 positions are modified to phosphoserine: serine 301 and serine 309. In terms of domain architecture, C-CAP/cofactor C-like spans 318–455 (PQKHAPVLEL…QGDDYREFPI (138 aa)).

It belongs to the CAP family. In terms of tissue distribution, found at relatively high levels in testes, at moderate levels in brain, heart and skeletal muscle, at lower levels in lung, skin, kidney and small intestine, and is undetectable in liver or spleen.

The protein localises to the cell membrane. Its function is as follows. Involved in the regulation of actin polymerization. This Rattus norvegicus (Rat) protein is Adenylyl cyclase-associated protein 2 (Cap2).